A 362-amino-acid chain; its full sequence is Probable endopolygalacturonase B (362 aa).

The first 20 residues, 1-20 (MHFLQNAVVAATMGAALAAA), serve as a signal peptide directing secretion. A propeptide spanning residues 21-25 (APLEK) is cleaved from the precursor. Cys-28 and Cys-43 are oxidised to a cystine. PbH1 repeat units lie at residues 155 to 184 (ADHLTITDVTIDNSAGTSKGHNTDAFDIGQ), 185 to 206 (STYITIDGATVYNQDDCLAINS), 207 to 227 (GEHITFTNGYCDGGHGLSIGS), 236 to 257 (VNDVTISNSKVLNSQNGVRIKT), 265 to 287 (VENVKFEDITLSDISKYGIVVEQ), and 299 to 344 (TNGV…DVTG). Asp-199 acts as the Proton donor in catalysis. Cysteines 201 and 217 form a disulfide. His-221 is an active-site residue. The cysteines at positions 327 and 332 are disulfide-linked. N-linked (GlcNAc...) asparagine glycosylation occurs at Asn-334. Cys-351 and Cys-360 are disulfide-bonded.

It belongs to the glycosyl hydrolase 28 family.

Its subcellular location is the secreted. The catalysed reaction is (1,4-alpha-D-galacturonosyl)n+m + H2O = (1,4-alpha-D-galacturonosyl)n + (1,4-alpha-D-galacturonosyl)m.. Involved in maceration and soft-rotting of plant tissue. Hydrolyzes the 1,4-alpha glycosidic bonds of de-esterified pectate in the smooth region of the plant cell wall. The sequence is that of Probable endopolygalacturonase B (pgaB) from Aspergillus niger (strain ATCC MYA-4892 / CBS 513.88 / FGSC A1513).